A 320-amino-acid chain; its full sequence is Cytochrome f (320 aa).

Positions 1–35 are cleaved as a signal peptide; sequence MQTRKTFSWIKEQINRSISVSLMIYIITRPSISIA. The heme site is built by Y36, C56, C59, and H60. Residues 286–306 form a helical membrane-spanning segment; it reads VQGLLFFLASVILAQIFLVLK.

The protein belongs to the cytochrome f family. In terms of assembly, the 4 large subunits of the cytochrome b6-f complex are cytochrome b6, subunit IV (17 kDa polypeptide, petD), cytochrome f and the Rieske protein, while the 4 small subunits are PetG, PetL, PetM and PetN. The complex functions as a dimer. Heme serves as cofactor.

It is found in the plastid. It localises to the chloroplast thylakoid membrane. Functionally, component of the cytochrome b6-f complex, which mediates electron transfer between photosystem II (PSII) and photosystem I (PSI), cyclic electron flow around PSI, and state transitions. This Daucus carota (Wild carrot) protein is Cytochrome f.